A 518-amino-acid polypeptide reads, in one-letter code: U3 small nucleolar RNA-associated protein 15 homolog (518 aa).

A2 is modified (N-acetylalanine). WD repeat units follow at residues 36-75 (KEFGAVSKVDFSPQPPYNYAVTASSRIHIYGRYSQEPIKT), 78-117 (RFKDTAYCATFRQDGRLLVAGSEDGGVQLFDISGRAPLRQ), 120-159 (GHTKAVHTVDFTADKYHVVSGADDYTVKLWDIPNSKEILT), 162-202 (EHSD…SVLS), 204-242 (EHGQPVESVLLFPSGGLLVSAGGRYVKVWDMLKGGQLLV), 246-285 (NHHKTVTCLCLSSSGQRLLSGSLDRKVKVYSTTSYKVVHS), and 287-326 (DYAASILSLALAHEDETIVVGMTNGILSVKHRKSEAKKES). Residue K249 forms a Glycyl lysine isopeptide (Lys-Gly) (interchain with G-Cter in SUMO2) linkage.

Part of the small subunit (SSU) processome, composed of more than 70 proteins and the RNA chaperone small nucleolar RNA (snoRNA) U3. May be a component of the proposed t-UTP subcomplex of the ribosomal small subunit (SSU) processome containing at least UTP4, WDR43, HEATR1, UTP15, WDR75. Interacts directly with UTP4 and WDR43.

It is found in the nucleus. The protein resides in the nucleolus. Ribosome biogenesis factor. Involved in nucleolar processing of pre-18S ribosomal RNA. Required for optimal pre-ribosomal RNA transcription by RNA polymerase I. Part of the small subunit (SSU) processome, first precursor of the small eukaryotic ribosomal subunit. During the assembly of the SSU processome in the nucleolus, many ribosome biogenesis factors, an RNA chaperone and ribosomal proteins associate with the nascent pre-rRNA and work in concert to generate RNA folding, modifications, rearrangements and cleavage as well as targeted degradation of pre-ribosomal RNA by the RNA exosome. The chain is U3 small nucleolar RNA-associated protein 15 homolog from Homo sapiens (Human).